Consider the following 194-residue polypeptide: Mpv17-like protein (194 aa).

Residues 1–14 lie on the Cytoplasmic side of the membrane; sequence MASWWRAFPQAARR. The helical transmembrane segment at 15-34 threads the bilayer; it reads YPWPTNVLLYAGLFSAGDAL. The targeting to peroxisomes stretch occupies residues 16-55; it reads PWPTNVLLYAGLFSAGDALQQRLRGGPADWRQTRRVATLA. At 35–50 the chain is on the lumenal side; the sequence is QQRLRGGPADWRQTRR. A helical membrane pass occupies residues 51-67; it reads VATLAVTFHGNFNYVWL. The Cytoplasmic segment spans residues 68–91; that stretch reads RLLERALPGRAPRTVLAKVLCDQT. Residues 92–110 form a helical membrane-spanning segment; that stretch reads VGGPIALSAFYVGMSVLQG. At 111 to 150 the chain is on the lumenal side; the sequence is KDDIFLDLKQKFWNTYKSGLMYWPFVQLTNFSLVPVHWRT. The chain crosses the membrane as a helical span at residues 151-168; that stretch reads AYTGLCAFLWATFLCFSQ. Residues 169–194 are Cytoplasmic-facing; the sequence is QSGDGTLQSIFIFLRRKEASDKSPEK.

Belongs to the peroxisomal membrane protein PXMP2/4 family. As to expression, isoform 1 and isoform 3 are expressed in the kidney (at protein level). Isoform 1 is expressed in the kidney, spleen, heart, brain, lung and liver. Isoform 3 is expressed in the kidney. Isoform 1 and isoform 3 expression increase during development, reache their highest level in adulthood and decrease with aging.

The protein resides in the peroxisome membrane. It is found in the cytoplasm. Participates in reactive oxygen species metabolism by up- or down-regulation of the genes of antioxidant enzymes. Protective against the mitochondrial apoptotic cascade. Its function is as follows. Participates in reactive oxygen species metabolism by up- or down-regulation of the genes of antioxidant enzymes. This Mus musculus (Mouse) protein is Mpv17-like protein (Mpv17l).